The chain runs to 157 residues: UPF0251 protein CLJ_B1488 (157 aa).

The protein belongs to the UPF0251 family.

The chain is UPF0251 protein CLJ_B1488 from Clostridium botulinum (strain 657 / Type Ba4).